The primary structure comprises 830 residues: Post-transcriptional regulator MKT1 (830 aa).

Lysine 4 is covalently cross-linked (Glycyl lysine isopeptide (Lys-Gly) (interchain with G-Cter in ubiquitin)). Residues 130–380 (RSRGWTQWNN…SPATTVTKNA (251 aa)) form an interaction with PBP1 region. Residues 347–400 (DSEKNNKDGKKSNLSSPSSASSSASPATTVTKNASEKLTYEKSSTKEVRKPRDI) form a disordered region. Phosphoserine is present on residues serine 358, serine 362, and serine 371. Residues 361-373 (SSPSSASSSASPA) show a composition bias toward low complexity. Residues 380-400 (ASEKLTYEKSSTKEVRKPRDI) show a composition bias toward basic and acidic residues.

Belongs to the XPG/RAD2 endonuclease family. In terms of assembly, interacts (via C-terminus) with PBP1 (via C-terminus).

Its subcellular location is the cytoplasm. The protein localises to the cytosol. Functionally, involved in 3'-UTR mediated RNA regulation. Binds to RNA-binding and RNA regulatory proteins. Complexes with PAB1-binding protein to promote mRNA interactions with poly(A)-binding protein. Promotes mating-type switching in mother cells by positively regulating HO expression. The chain is Post-transcriptional regulator MKT1 (MKT1) from Saccharomyces cerevisiae (strain ATCC 204508 / S288c) (Baker's yeast).